Consider the following 391-residue polypeptide: tRNA-specific 2-thiouridylase MnmA (391 aa).

ATP is bound by residues 9–16 and Met-35; that span reads GMSGGVDS. The interaction with target base in tRNA stretch occupies residues 95-97; that stretch reads NPD. Cys-100 serves as the catalytic Nucleophile. Cysteines 100 and 196 form a disulfide. Residue Gly-124 coordinates ATP. The tract at residues 146-148 is interaction with tRNA; sequence KDQ. The active-site Cysteine persulfide intermediate is Cys-196. An interaction with tRNA region spans residues 308–309; the sequence is RY.

The protein belongs to the MnmA/TRMU family.

Its subcellular location is the cytoplasm. The enzyme catalyses S-sulfanyl-L-cysteinyl-[protein] + uridine(34) in tRNA + AH2 + ATP = 2-thiouridine(34) in tRNA + L-cysteinyl-[protein] + A + AMP + diphosphate + H(+). In terms of biological role, catalyzes the 2-thiolation of uridine at the wobble position (U34) of tRNA, leading to the formation of s(2)U34. This is tRNA-specific 2-thiouridylase MnmA from Burkholderia orbicola (strain MC0-3).